The primary structure comprises 229 residues: Sec-independent protein translocase protein TatB (229 aa).

A helical transmembrane segment spans residues 1 to 21; sequence MFDIGFSELLLFGVIALIVLG. The segment at 90-131 is disordered; sequence EFEHSQSQNLKTSDKAASPANQANNDSAIQNNNEPATFSYAY. Over residues 108-131 the composition is skewed to polar residues; it reads PANQANNDSAIQNNNEPATFSYAY.

The protein belongs to the TatB family. The Tat system comprises two distinct complexes: a TatABC complex, containing multiple copies of TatA, TatB and TatC subunits, and a separate TatA complex, containing only TatA subunits. Substrates initially bind to the TatABC complex, which probably triggers association of the separate TatA complex to form the active translocon.

It localises to the cell inner membrane. Its function is as follows. Part of the twin-arginine translocation (Tat) system that transports large folded proteins containing a characteristic twin-arginine motif in their signal peptide across membranes. Together with TatC, TatB is part of a receptor directly interacting with Tat signal peptides. TatB may form an oligomeric binding site that transiently accommodates folded Tat precursor proteins before their translocation. The polypeptide is Sec-independent protein translocase protein TatB (Psychrobacter arcticus (strain DSM 17307 / VKM B-2377 / 273-4)).